A 466-amino-acid polypeptide reads, in one-letter code: tRNA modification GTPase MnmE (466 aa).

(6S)-5-formyl-5,6,7,8-tetrahydrofolate-binding residues include Arg25, Glu82, and Lys127. A TrmE-type G domain is found at 223 to 388; it reads GIKVVIAGQP…LRRQLLQIAG (166 aa). Residue Asn233 participates in K(+) binding. GTP-binding positions include 233 to 238, 252 to 258, 277 to 280, 346 to 349, and 369 to 371; these read NAGKSS, TPIAGTT, DTAG, NKAD, and SAR. Ser237 is a Mg(2+) binding site. K(+) is bound by residues Thr252, Ile254, and Thr257. Thr258 is a Mg(2+) binding site. Residue Lys466 participates in (6S)-5-formyl-5,6,7,8-tetrahydrofolate binding.

It belongs to the TRAFAC class TrmE-Era-EngA-EngB-Septin-like GTPase superfamily. TrmE GTPase family. Homodimer. Heterotetramer of two MnmE and two MnmG subunits. It depends on K(+) as a cofactor.

It is found in the cytoplasm. Functionally, exhibits a very high intrinsic GTPase hydrolysis rate. Involved in the addition of a carboxymethylaminomethyl (cmnm) group at the wobble position (U34) of certain tRNAs, forming tRNA-cmnm(5)s(2)U34. The protein is tRNA modification GTPase MnmE of Acidovorax sp. (strain JS42).